A 321-amino-acid chain; its full sequence is Oxidoreductase P35 (321 aa).

The protein belongs to the Gfo/Idh/MocA family.

It is found in the cell surface. In terms of biological role, oxidoreductase that may be involved in ulvan degradation. Ulvan is the main polysaccharide component of the Ulvales (green seaweed) cell wall. It is composed of disaccharide building blocks comprising 3-sulfated rhamnose (Rha3S) linked to D-glucuronic acid (GlcA), L-iduronic acid (IduA), or D-xylose (Xyl). The protein is Oxidoreductase P35 of Formosa agariphila (strain DSM 15362 / KCTC 12365 / LMG 23005 / KMM 3901 / M-2Alg 35-1).